The sequence spans 141 residues: Hemoglobin subunit beta-C (141 aa).

Positions 1 to 141 constitute a Globin domain; that stretch reads PNKALITGFW…VASALAHRYH (141 aa). Heme b-binding residues include histidine 58 and histidine 87.

The protein belongs to the globin family. Heterotetramer of two alpha chains and two beta chains. As to expression, red blood cells.

Its function is as follows. Involved in oxygen transport from the lung to the various peripheral tissues. The sequence is that of Hemoglobin subunit beta-C from Ammotragus lervia (Barbary sheep).